The chain runs to 176 residues: Pituitary adenylate cyclase-activating polypeptide (176 aa).

An N-terminal signal peptide occupies residues 1-24 (MTMCSGARLALLVYGIIMHSSVYS). The propeptide occupies 25–79 (SPAAAGLRFPGIRPEEEAYGEDGNPLPDFDGSEPPGAGSPASAPRAAAAWYRPAG). The disordered stretch occupies residues 39–68 (EEEAYGEDGNPLPDFDGSEPPGAGSPASAP). The segment covering 56-68 (SEPPGAGSPASAP) has biased composition (low complexity). The interval 150–158 (VKKYLAAVL) is important for receptor binding. L158 carries the leucine amide modification. K169 carries the lysine amide modification. Positions 173 to 176 (IAYL) are excised as a propeptide.

Belongs to the glucagon family.

The protein localises to the secreted. Its function is as follows. PACAP is a neuropeptide involved in diverse array of physiological processes through activating the PACAP subfamily of class B1 G protein-coupled receptors: VIP receptor 1 (VIPR1), VIP receptor 2 (VIPR2), and PACAP type I receptor (ADCYAP1R1). Exerts neuroprotective and general cytoprotective effects due to anti-apoptotic, anti-inflammatory, and antioxidant actions. Promotes neuron projection development through the RAPGEF2/Rap1/B-Raf/ERK pathway. In chromaffin cells, induces long-lasting increase of intracellular calcium concentrations and neuroendocrine secretion. Involved in the control of glucose homeostasis, induces insulin secretion by pancreatic beta cells. PACAP exists in two bioactive forms from proteolysis of the same precursor protein, PACAP27 and PACAP38, which differ by eleven amino acid residues in the C-terminus. The protein is Pituitary adenylate cyclase-activating polypeptide of Homo sapiens (Human).